A 197-amino-acid chain; its full sequence is NADH-quinone oxidoreductase subunit C (197 aa).

Belongs to the complex I 30 kDa subunit family. NDH-1 is composed of 14 different subunits. Subunits NuoB, C, D, E, F, and G constitute the peripheral sector of the complex.

The protein localises to the cell inner membrane. The catalysed reaction is a quinone + NADH + 5 H(+)(in) = a quinol + NAD(+) + 4 H(+)(out). In terms of biological role, NDH-1 shuttles electrons from NADH, via FMN and iron-sulfur (Fe-S) centers, to quinones in the respiratory chain. The immediate electron acceptor for the enzyme in this species is believed to be ubiquinone. Couples the redox reaction to proton translocation (for every two electrons transferred, four hydrogen ions are translocated across the cytoplasmic membrane), and thus conserves the redox energy in a proton gradient. This chain is NADH-quinone oxidoreductase subunit C, found in Methylobacillus flagellatus (strain ATCC 51484 / DSM 6875 / VKM B-1610 / KT).